We begin with the raw amino-acid sequence, 426 residues long: Glutamate-1-semialdehyde 2,1-aminomutase (426 aa).

Position 265 is an N6-(pyridoxal phosphate)lysine (Lys-265).

The protein belongs to the class-III pyridoxal-phosphate-dependent aminotransferase family. HemL subfamily. In terms of assembly, homodimer. Requires pyridoxal 5'-phosphate as cofactor.

The protein localises to the cytoplasm. It carries out the reaction (S)-4-amino-5-oxopentanoate = 5-aminolevulinate. The protein operates within porphyrin-containing compound metabolism; protoporphyrin-IX biosynthesis; 5-aminolevulinate from L-glutamyl-tRNA(Glu): step 2/2. The chain is Glutamate-1-semialdehyde 2,1-aminomutase from Alteromonas mediterranea (strain DSM 17117 / CIP 110805 / LMG 28347 / Deep ecotype).